Consider the following 456-residue polypeptide: Bifunctional protein GlmU (456 aa).

A pyrophosphorylase region spans residues 1–227 (MKLRVVILAA…AQEVEGANNR (227 aa)). UDP-N-acetyl-alpha-D-glucosamine contacts are provided by residues 8 to 11 (LAAG), Lys22, Gln73, 78 to 79 (GT), 100 to 102 (YGD), Gly137, Glu152, Asn167, and Asn225. Asp102 lines the Mg(2+) pocket. Asn225 contacts Mg(2+). Positions 228 to 248 (QQLASLERALQQRQAEELMTQ) are linker. Positions 249-456 (GVTLIDPARF…WQRPQSKKGT (208 aa)) are N-acetyltransferase. UDP-N-acetyl-alpha-D-glucosamine is bound by residues Arg331 and Lys349. Residue His361 is the Proton acceptor of the active site. 2 residues coordinate UDP-N-acetyl-alpha-D-glucosamine: Tyr364 and Asn375. Acetyl-CoA contacts are provided by residues Ala378, 384 to 385 (NY), Ser403, Ala421, and Arg438.

It in the N-terminal section; belongs to the N-acetylglucosamine-1-phosphate uridyltransferase family. The protein in the C-terminal section; belongs to the transferase hexapeptide repeat family. In terms of assembly, homotrimer. The cofactor is Mg(2+).

Its subcellular location is the cytoplasm. It carries out the reaction alpha-D-glucosamine 1-phosphate + acetyl-CoA = N-acetyl-alpha-D-glucosamine 1-phosphate + CoA + H(+). It catalyses the reaction N-acetyl-alpha-D-glucosamine 1-phosphate + UTP + H(+) = UDP-N-acetyl-alpha-D-glucosamine + diphosphate. It participates in nucleotide-sugar biosynthesis; UDP-N-acetyl-alpha-D-glucosamine biosynthesis; N-acetyl-alpha-D-glucosamine 1-phosphate from alpha-D-glucosamine 6-phosphate (route II): step 2/2. It functions in the pathway nucleotide-sugar biosynthesis; UDP-N-acetyl-alpha-D-glucosamine biosynthesis; UDP-N-acetyl-alpha-D-glucosamine from N-acetyl-alpha-D-glucosamine 1-phosphate: step 1/1. Its pathway is bacterial outer membrane biogenesis; LPS lipid A biosynthesis. Its function is as follows. Catalyzes the last two sequential reactions in the de novo biosynthetic pathway for UDP-N-acetylglucosamine (UDP-GlcNAc). The C-terminal domain catalyzes the transfer of acetyl group from acetyl coenzyme A to glucosamine-1-phosphate (GlcN-1-P) to produce N-acetylglucosamine-1-phosphate (GlcNAc-1-P), which is converted into UDP-GlcNAc by the transfer of uridine 5-monophosphate (from uridine 5-triphosphate), a reaction catalyzed by the N-terminal domain. This Idiomarina loihiensis (strain ATCC BAA-735 / DSM 15497 / L2-TR) protein is Bifunctional protein GlmU.